The following is a 1988-amino-acid chain: Protein Ycf2 (1988 aa).

1337 to 1344 provides a ligand contact to ATP; it reads GSIGTGRS. The segment at 1377-1396 is disordered; that stretch reads SDDDSDDIDDSGDIDDSDDI.

The protein belongs to the Ycf2 family.

It localises to the plastid. The protein resides in the chloroplast stroma. Probable ATPase of unknown function. Its presence in a non-photosynthetic plant (Epifagus virginiana) and experiments in tobacco indicate that it has an essential function which is probably not related to photosynthesis. This is Protein Ycf2 from Cucumis sativus (Cucumber).